The primary structure comprises 205 residues: dITP/XTP pyrophosphatase (205 aa).

T16–K21 provides a ligand contact to substrate. E48 and D77 together coordinate Mg(2+). D77 (proton acceptor) is an active-site residue. Substrate is bound by residues S78, F162 to D165, K185, and H190 to R191.

It belongs to the HAM1 NTPase family. Homodimer. Requires Mg(2+) as cofactor.

It carries out the reaction XTP + H2O = XMP + diphosphate + H(+). The catalysed reaction is dITP + H2O = dIMP + diphosphate + H(+). The enzyme catalyses ITP + H2O = IMP + diphosphate + H(+). Functionally, pyrophosphatase that catalyzes the hydrolysis of nucleoside triphosphates to their monophosphate derivatives, with a high preference for the non-canonical purine nucleotides XTP (xanthosine triphosphate), dITP (deoxyinosine triphosphate) and ITP. Seems to function as a house-cleaning enzyme that removes non-canonical purine nucleotides from the nucleotide pool, thus preventing their incorporation into DNA/RNA and avoiding chromosomal lesions. This is dITP/XTP pyrophosphatase from Erwinia tasmaniensis (strain DSM 17950 / CFBP 7177 / CIP 109463 / NCPPB 4357 / Et1/99).